A 251-amino-acid polypeptide reads, in one-letter code: YlmG homolog protein 2, chloroplastic (251 aa).

Residues 1-51 (MEASANEPAMKSLKSNPSGPIPNFFVSLSSAFTQTPLVRSNKPNLLLLPPV) constitute a chloroplast transit peptide. The next 2 membrane-spanning stretches (helical) occupy residues 119-139 (GFAA…NGLI) and 183-203 (FIPP…VLNA). The span at 232 to 243 (VRRRRLSSHKDH) shows a compositional bias: basic residues. The segment at 232 to 251 (VRRRRLSSHKDHRPSSASMT) is disordered.

The protein belongs to the YggT family.

The protein localises to the plastid. The protein resides in the chloroplast thylakoid membrane. Functionally, not required for the biogenesis and accumulation of native cytochrome b6 in the thylakoid membrane. Not functionally involved in the pathway for covalent binding of the c-type heme to cytochrome b6. This chain is YlmG homolog protein 2, chloroplastic, found in Arabidopsis thaliana (Mouse-ear cress).